An 837-amino-acid polypeptide reads, in one-letter code: Ribosome biogenesis ATPase RIX7 (837 aa).

2 disordered regions span residues 36-56 (RSLR…EEDE) and 149-207 (ITST…LKSL). Ser42 is subject to Phosphoserine. Residues 43–56 (QGEEGENNEGEEDE) show a composition bias toward acidic residues. A compositionally biased stretch (polar residues) spans 149–163 (ITSTWSKSGSVSESI). Basic residues predominate over residues 176 to 192 (KSKKRSKEGTCKVKRQK). Residue 246–253 (GPPGCGKT) coordinates ATP. A disordered region spans residues 443 to 468 (PTTATDSSEDNMEIDETANGDESSLK). Positions 449-461 (SSEDNMEIDETAN) are enriched in acidic residues. 574–581 (GPPGCGKT) is an ATP binding site.

It belongs to the AAA ATPase family.

The protein resides in the nucleus. It is found in the nucleolus. Its function is as follows. Involved in ribosome biogenesis. Seems to be required for restructuring nucleoplasmic 60S pre-ribosomal particles to make them competent for nuclear export. The sequence is that of Ribosome biogenesis ATPase RIX7 (RIX7) from Saccharomyces cerevisiae (strain ATCC 204508 / S288c) (Baker's yeast).